Here is a 74-residue protein sequence, read N- to C-terminus: Small ribosomal subunit protein bS18 (74 aa).

This sequence belongs to the bacterial ribosomal protein bS18 family. Part of the 30S ribosomal subunit. Forms a tight heterodimer with protein bS6.

Functionally, binds as a heterodimer with protein bS6 to the central domain of the 16S rRNA, where it helps stabilize the platform of the 30S subunit. This is Small ribosomal subunit protein bS18 from Coprothermobacter proteolyticus (strain ATCC 35245 / DSM 5265 / OCM 4 / BT).